Reading from the N-terminus, the 128-residue chain is Protein BEX2 (128 aa).

The interval methionine 1–glycine 44 is disordered. The span at glutamate 20–lysine 33 shows a compositional bias: basic and acidic residues. Omega-N-methylarginine is present on arginine 50. The segment at glutamine 103–proline 128 is disordered. Basic and acidic residues predominate over residues proline 115–proline 128. Residues histidine 117 to asparagine 121 form a his cluster region. Cysteine 125 contributes to the Zn(2+) binding site.

Belongs to the BEX family. Interacts with LMO2, possibly leading to regulate the transcriptional activity of a DNA-binding complex containing LMO2. Interacts with OMP.

It is found in the cytoplasm. Its subcellular location is the nucleus. Functionally, regulator of mitochondrial apoptosis and G1 cell cycle. Regulates the level of PP2A regulatory subunit B and PP2A phosphatase activity. In absence of reductive stress, acts as a pseudosubstrate for the CRL2(FEM1B) complex: associates with FEM1B via zinc, thereby preventing association between FEM1B and its substrates. The chain is Protein BEX2 (BEX2) from Bos taurus (Bovine).